Here is a 211-residue protein sequence, read N- to C-terminus: FMN-dependent NADH:quinone oxidoreductase (211 aa).

FMN is bound by residues 17–19 (SYS) and 99–102 (MWNF).

It belongs to the azoreductase type 1 family. As to quaternary structure, homodimer. It depends on FMN as a cofactor.

It catalyses the reaction 2 a quinone + NADH + H(+) = 2 a 1,4-benzosemiquinone + NAD(+). The enzyme catalyses N,N-dimethyl-1,4-phenylenediamine + anthranilate + 2 NAD(+) = 2-(4-dimethylaminophenyl)diazenylbenzoate + 2 NADH + 2 H(+). Its function is as follows. Quinone reductase that provides resistance to thiol-specific stress caused by electrophilic quinones. Also exhibits azoreductase activity. Catalyzes the reductive cleavage of the azo bond in aromatic azo compounds to the corresponding amines. The protein is FMN-dependent NADH:quinone oxidoreductase of Exiguobacterium sp. (strain ATCC BAA-1283 / AT1b).